The primary structure comprises 628 residues: tRNA uridine 5-carboxymethylaminomethyl modification enzyme MnmG (628 aa).

Residues 14 to 19, Val-126, and Ser-181 each bind FAD; that span reads GAGHAG. 273–287 serves as a coordination point for NAD(+); the sequence is GPRYCPSIEDKVVRF. Gln-370 contributes to the FAD binding site.

This sequence belongs to the MnmG family. In terms of assembly, homodimer. Heterotetramer of two MnmE and two MnmG subunits. It depends on FAD as a cofactor.

It localises to the cytoplasm. In terms of biological role, NAD-binding protein involved in the addition of a carboxymethylaminomethyl (cmnm) group at the wobble position (U34) of certain tRNAs, forming tRNA-cmnm(5)s(2)U34. The chain is tRNA uridine 5-carboxymethylaminomethyl modification enzyme MnmG from Bacillus subtilis (strain 168).